The chain runs to 495 residues: Membrane-bound glycerophospholipid O-acyltransferase 1 (495 aa).

6 helical membrane passes run 34-54 (VNFV…RIYL), 70-90 (IFGI…LFVL), 126-146 (IYIF…MIVT), 180-200 (PSFL…AGPC), 238-258 (TGAV…FLTL), and 297-317 (YFAW…FSGV). Residues Asn-350 and His-381 contribute to the active site. 3 helical membrane-spanning segments follow: residues 371–391 (VLTF…YFTF), 426–446 (TWAV…MLAV), and 450–470 (ISLY…IILF). Ser-488 carries the phosphoserine modification.

This sequence belongs to the membrane-bound acyltransferase family. Expressed in neutrophils.

It localises to the endoplasmic reticulum membrane. It catalyses the reaction a 1-acyl-sn-glycero-3-phospho-L-serine + an acyl-CoA = a 1,2-diacyl-sn-glycero-3-phospho-L-serine + CoA. The catalysed reaction is a 1-acyl-sn-glycero-3-phosphocholine + an acyl-CoA = a 1,2-diacyl-sn-glycero-3-phosphocholine + CoA. It carries out the reaction a 1-acyl-sn-glycero-3-phosphoethanolamine + an acyl-CoA = a 1,2-diacyl-sn-glycero-3-phosphoethanolamine + CoA. The enzyme catalyses 1-(9Z-octadecenoyl)-sn-glycero-3-phospho-L-serine + (9Z)-octadecenoyl-CoA = 1,2-di-(9Z)-octadecenoyl-sn-glycero-3-phospho-L-serine + CoA. It catalyses the reaction 1-(9Z-octadecenoyl)-sn-glycero-3-phospho-L-serine + octadecanoyl-CoA = 1-(9Z-octadecenoyl)-2-octadecanoyl-sn-glycero-3-phospho-L-serine + CoA. The catalysed reaction is 1-(9Z-octadecenoyl)-sn-glycero-3-phospho-L-serine + (9Z)-hexadecenoyl-CoA = 1-(9Z-octadecenoyl)-2-(9Z-hexadecenoyl)-sn-glycero-3-phospho-L-serine + CoA. It carries out the reaction 1-(9Z-octadecenoyl)-sn-glycero-3-phospho-L-serine + (9Z,12Z)-octadecadienoyl-CoA = 1-(9Z-octadecenoyl)-2-(9Z,12Z-octadienoyl)-sn-glycero-3-phospho-L-serine + CoA. The enzyme catalyses 1-hexadecanoyl-sn-glycero-3-phosphocholine + (9Z)-octadecenoyl-CoA = 1-hexadecanoyl-2-(9Z-octadecenoyl)-sn-glycero-3-phosphocholine + CoA. It catalyses the reaction a 1-O-(1Z-alkenyl)-sn-glycero-3-phosphoethanolamine + (9Z)-octadecenoyl-CoA = 1-O-(1Z)-alkenyl-2-(9Z)-octadecenoyl-sn-glycero-3-phosphoethanolamine + CoA. The catalysed reaction is 1-octadecanoyl-sn-glycero-3-phosphoethanolamine + (9Z)-octadecenoyl-CoA = 1-octadecanoyl-2-(9Z-octadecenoyl)-sn-glycero-3-phosphoethanolamine + CoA. It carries out the reaction 1-(9Z-octadecenoyl)-sn-glycero-3-phosphoethanolamine + (9Z)-octadecenoyl-CoA = 1,2-di-(9Z-octadecenoyl)-sn-glycero-3-phosphoethanolamine + CoA. The enzyme catalyses 1-hexadecanoyl-sn-glycero-3-phosphoethanolamine + (9Z)-octadecenoyl-CoA = 1-hexadecanoyl-2-(9Z-octadecenoyl)-sn-glycero-3-phosphoethanolamine + CoA. It catalyses the reaction 1-(10Z-heptadecenoyl)-sn-glycero-3-phosphoethanolamine + hexadecanoyl-CoA = 1-(10Z-heptadecenoyl)-2-hexadecanoyl-sn-glycero-3-phosphoethanolamine + CoA. The catalysed reaction is 1-(10Z-heptadecenoyl)-sn-glycero-3-phosphoethanolamine + (9Z)-octadecenoyl-CoA = 1-(10Z-heptadecenoyl)-2-(9Z-octadecenoyl)-sn-glycero-3-phosphoethanolamine + CoA. It functions in the pathway lipid metabolism; phospholipid metabolism. With respect to regulation, partially inhibited by thimerosal. Acyltransferase which catalyzes the transfer of an acyl group from an acyl-CoA towards a lysophospholipid producing a phospholipid and participates in the reacylation step of the phospholipid remodeling pathway also known as the Lands cycle. Acts on lysophosphatidylserine (1-acyl-2-hydroxy-sn-glycero-3-phospho-L-serine or LPS) and lysophosphatidylethanolamine (1-acyl-sn-glycero-3-phosphoethanolamine or LPE), and to a lesser extend lysophosphatidylcholine. Prefers oleoyl-CoA as the acyl donor and 1-oleoyl-LPE as acceptor. May play a role in neurite outgrowth during neuronal differentiation. The sequence is that of Membrane-bound glycerophospholipid O-acyltransferase 1 from Homo sapiens (Human).